The chain runs to 239 residues: Endonuclease V (239 aa).

Mg(2+)-binding residues include aspartate 48 and aspartate 116.

The protein belongs to the endonuclease V family. Mg(2+) serves as cofactor.

The protein localises to the cytoplasm. It catalyses the reaction Endonucleolytic cleavage at apurinic or apyrimidinic sites to products with a 5'-phosphate.. DNA repair enzyme involved in the repair of deaminated bases. Selectively cleaves double-stranded DNA at the second phosphodiester bond 3' to a deoxyinosine leaving behind the intact lesion on the nicked DNA. This chain is Endonuclease V, found in Xanthomonas oryzae pv. oryzae (strain MAFF 311018).